Here is a 309-residue protein sequence, read N- to C-terminus: uncharacterized protein (309 aa).

Residues Arg-17–Pro-254 enclose the Radical SAM core domain. [4Fe-4S] cluster-binding residues include Cys-33, Cys-45, and Cys-48.

The protein belongs to the radical SAM superfamily. The cofactor is [4Fe-4S] cluster.

This is an uncharacterized protein from Escherichia coli O157:H7.